Reading from the N-terminus, the 1044-residue chain is Integrin alpha-8 (1044 aa).

The N-terminal stretch at 1–23 is a signal peptide; that stretch reads MPRRQPPRPLLLLSALLCAPASA. Over 24 to 991 the chain is Extracellular; that stretch reads FNLDEEKLTV…WSTPNVSFVI (968 aa). FG-GAP repeat units lie at residues 28-90, 104-165, 170-222, 236-288, 289-354, 355-413, and 417-480; these read EEKL…RCRQ, NGTR…AYAE, RNSN…ITNY, QTGV…SSDL, TFIQ…FLFR, DPQI…GLKT, and QVLN…LNPM. Residue N66 is glycosylated (N-linked (GlcNAc...) asparagine). A disulfide bond links C81 and C88. N-linked (GlcNAc...) asparagine glycosylation occurs at N104. Cysteines 132 and 153 form a disulfide. N159 carries N-linked (GlcNAc...) asparagine glycosylation. An intrachain disulfide couples C169 to C182. N221 carries an N-linked (GlcNAc...) asparagine glycan. Ca(2+)-binding residues include E257, T259, D261, and E265. N-linked (GlcNAc...) asparagine glycans are attached at residues N284 and N293. Ca(2+) contacts are provided by D311, N313, D315, L317, D319, D377, N379, D381, Y383, and D385. Residues 437 to 439 carry the Cell attachment site motif; that stretch reads RGD. Residues D441, D443, N445, Y447, and D449 each contribute to the Ca(2+) site. An N-linked (GlcNAc...) asparagine glycan is attached at N486. 2 cysteine pairs are disulfide-bonded: C489-C500 and C506-C562. Residue N587 is glycosylated (N-linked (GlcNAc...) asparagine). 2 disulfides stabilise this stretch: C623–C629 and C695–C708. Residues N701, N719, N751, N762, N818, N877, and N904 are each glycosylated (N-linked (GlcNAc...) asparagine). Disulfide bonds link C849/C905 and C910/C915. Residues N952 and N986 are each glycosylated (N-linked (GlcNAc...) asparagine). Residues 992–1015 form a helical membrane-spanning segment; sequence PLWVIILAIMLGLLVLAVLTLALW. Over 1016-1044 the chain is Cytoplasmic; that stretch reads KCGFFDRARPPQDDMADREQLTNNKTTDA.

This sequence belongs to the integrin alpha chain family. In terms of assembly, heterodimer of an alpha and a beta subunit. The alpha subunit is composed of a heavy and a light chain linked by a disulfide bond. Alpha-8 associates with beta-1. As to expression, prominently expressed on axons and on cells in contact with basal laminae in embryos.

The protein localises to the membrane. Its subcellular location is the cell membrane. In terms of biological role, integrin alpha-8/beta-1 functions in the genesis of kidney and probably of other organs by regulating the recruitment of mesenchymal cells into epithelial structures. It recognizes the sequence R-G-D in a wide array of ligands including TNC, FN1, SPP1, TGFB1, TGFB3 and VTN. NPNT is probably its functional ligand in kidney genesis. Neuronal receptor for TNC it mediates cell-cell interactions and regulates neurite outgrowth of sensory and motor neurons. The polypeptide is Integrin alpha-8 (ITGA8) (Gallus gallus (Chicken)).